Consider the following 632-residue polypeptide: DNA ligase (632 aa).

NAD(+) is bound by residues 45–49 (NEDYD) and 89–90 (SI). The active-site N6-AMP-lysine intermediate is the Lys-127. Arg-143, Glu-174, and Lys-286 together coordinate NAD(+). Zn(2+) contacts are provided by Cys-374, Cys-377, Cys-390, and Cys-396. The region spanning 561–632 (DKRIVFTGKM…EADYLSKITM (72 aa)) is the BRCT domain.

It belongs to the NAD-dependent DNA ligase family. LigA subfamily. The cofactor is Mg(2+). Requires Mn(2+) as cofactor.

The catalysed reaction is NAD(+) + (deoxyribonucleotide)n-3'-hydroxyl + 5'-phospho-(deoxyribonucleotide)m = (deoxyribonucleotide)n+m + AMP + beta-nicotinamide D-nucleotide.. In terms of biological role, DNA ligase that catalyzes the formation of phosphodiester linkages between 5'-phosphoryl and 3'-hydroxyl groups in double-stranded DNA using NAD as a coenzyme and as the energy source for the reaction. It is essential for DNA replication and repair of damaged DNA. The chain is DNA ligase from Vesicomyosocius okutanii subsp. Calyptogena okutanii (strain HA).